The sequence spans 115 residues: Large ribosomal subunit protein bL19 (115 aa).

Belongs to the bacterial ribosomal protein bL19 family.

In terms of biological role, this protein is located at the 30S-50S ribosomal subunit interface and may play a role in the structure and function of the aminoacyl-tRNA binding site. In Streptococcus equi subsp. zooepidemicus (strain H70), this protein is Large ribosomal subunit protein bL19.